Reading from the N-terminus, the 340-residue chain is MGGARRLKLDGSIPNQLARAADAAVALERNGFDGGWTAEASHDPFLPLLLAAEHTSRLELGTNIAVAFARNPMIVANVGWDLQTYSKGRLILGLGTQIRPHIEKRFSMPWGHPARRMREFVAALRAIWLAWQDGTKLCFEGEFYTHKIMTPMFTPEPQPYPVPRVFIAAVGEAMTEMCGEVADGHLGHPMVSKRYLTEVSVPALLRGLARSGRDRSAFEVSCEVMVATGADDAELAAACTATRKQIAFYGSTPAYRKVLEQHGWGDLHPELHRLSKLGEWEAMGGLIDDEMLGAFAVVGPVDTIAGALRNRCEGVVDRVLPIFMAASQECINAALQDFRR.

The first 20 residues, 1–20, serve as a signal peptide directing secretion; that stretch reads MGGARRLKLDGSIPNQLARA.

This is an uncharacterized protein from Mycobacterium tuberculosis (strain CDC 1551 / Oshkosh).